We begin with the raw amino-acid sequence, 141 residues long: Large ribosomal subunit protein uL11 (141 aa).

This sequence belongs to the universal ribosomal protein uL11 family. As to quaternary structure, part of the ribosomal stalk of the 50S ribosomal subunit. Interacts with L10 and the large rRNA to form the base of the stalk. L10 forms an elongated spine to which L12 dimers bind in a sequential fashion forming a multimeric L10(L12)X complex. In terms of processing, one or more lysine residues are methylated.

Forms part of the ribosomal stalk which helps the ribosome interact with GTP-bound translation factors. This chain is Large ribosomal subunit protein uL11, found in Methylacidiphilum infernorum (isolate V4) (Methylokorus infernorum (strain V4)).